The primary structure comprises 288 residues: DegV domain-containing protein SAS0714 (288 aa).

Residues 3-282 form the DegV domain; that stretch reads IAVMTDSTSY…SGGLGLGYVG (280 aa). Hexadecanoate is bound by residues T62 and S95.

May bind long-chain fatty acids, such as palmitate, and may play a role in lipid transport or fatty acid metabolism. The protein is DegV domain-containing protein SAS0714 of Staphylococcus aureus (strain MSSA476).